Reading from the N-terminus, the 59-residue chain is Cuticle protein 7 isoform c (59 aa).

At Q1 the chain carries Pyrrolidone carboxylic acid.

The polypeptide is Cuticle protein 7 isoform c (Limulus polyphemus (Atlantic horseshoe crab)).